The sequence spans 295 residues: Small ribosomal subunit protein uS2 (295 aa).

At S2 the chain carries N-acetylserine. Position 43 is a phosphoserine (S43). At K52 the chain carries N6-acetyllysine. The interaction with PPP1R16B stretch occupies residues 54-113 (TWEKLLLAARAIVAIENPADVSVISSRNTGQRAVLKFAAATGATPIAGRFTPGTFTNQIQ). K89 bears the N6-acetyllysine; alternate mark. K89 participates in a covalent cross-link: Glycyl lysine isopeptide (Lys-Gly) (interchain with G-Cter in SUMO2); alternate. A Phosphothreonine modification is found at T97. Laminin-binding regions lie at residues 161–180 (IPCN…MLAR) and 205–229 (RDPE…EFQG). 5 [DE]-W-[ST] repeats span residues 230-232 (EWT), 247-249 (DWS), 266-268 (DWS), 275-277 (DWS), and 293-295 (EWS). A laminin-binding region spans residues 242–295 (QPEVADWSEGVQVPSVPIQQFPTEDWSAQPATEDWSAAPTAQATEWVGATTEWS). A disordered region spans residues 266 to 295 (DWSAQPATEDWSAAPTAQATEWVGATTEWS).

It belongs to the universal ribosomal protein uS2 family. As to quaternary structure, monomer (37LRP) and homodimer (67LR). Component of the small ribosomal subunit. Mature ribosomes consist of a small (40S) and a large (60S) subunit. The 40S subunit contains about 33 different proteins and 1 molecule of RNA (18S). The 60S subunit contains about 49 different proteins and 3 molecules of RNA (28S, 5.8S and 5S). Interacts with RPS21. Interacts with several laminins including at least LAMB1. Interacts with MDK. The mature dimeric form interacts with PPP1R16B (via its fourth ankyrin repeat). Interacts with PPP1CA only in the presence of PPP1R16B. Post-translationally, acylated. Acylation may be a prerequisite for conversion of the monomeric 37 kDa laminin receptor precursor (37LRP) to the mature dimeric 67 kDa laminin receptor (67LR), and may provide a mechanism for membrane association. Cleaved by stromelysin-3 (ST3) at the cell surface. Cleavage by stromelysin-3 may be a mechanism to alter cell-extracellular matrix interactions. Expressed in most neurons and in a subset of glial cells. The overall distribution of LR correlates with that reported for laminin-1 but also with brain regions classically associated with prion-related neurodegeneration.

The protein localises to the cell membrane. It localises to the cytoplasm. It is found in the nucleus. In terms of biological role, required for the assembly and/or stability of the 40S ribosomal subunit. Required for the processing of the 20S rRNA-precursor to mature 18S rRNA in a late step of the maturation of 40S ribosomal subunits. Also functions as a cell surface receptor for laminin. Plays a role in cell adhesion to the basement membrane and in the consequent activation of signaling transduction pathways. May play a role in cell fate determination and tissue morphogenesis. Also acts as a receptor for several other ligands, including the pathogenic prion protein, viruses, and bacteria. Acts as a PPP1R16B-dependent substrate of PPP1CA. The chain is Small ribosomal subunit protein uS2 (Rpsa) from Rattus norvegicus (Rat).